The sequence spans 302 residues: Oxygen-dependent coproporphyrinogen-III oxidase (302 aa).

A substrate-binding site is contributed by Ser94. Residues His98 and His108 each coordinate a divalent metal cation. His108 functions as the Proton donor in the catalytic mechanism. 110–112 (NVR) contacts substrate. His147 and His177 together coordinate a divalent metal cation. The tract at residues 242-277 (YVEFNLVWDRGTLFGLQSGGRTESILMSMPPLARWE) is important for dimerization. Substrate is bound at residue 260-262 (GGR).

This sequence belongs to the aerobic coproporphyrinogen-III oxidase family. Homodimer. It depends on a divalent metal cation as a cofactor.

The protein localises to the cytoplasm. The enzyme catalyses coproporphyrinogen III + O2 + 2 H(+) = protoporphyrinogen IX + 2 CO2 + 2 H2O. The protein operates within porphyrin-containing compound metabolism; protoporphyrin-IX biosynthesis; protoporphyrinogen-IX from coproporphyrinogen-III (O2 route): step 1/1. Functionally, involved in the heme biosynthesis. Catalyzes the aerobic oxidative decarboxylation of propionate groups of rings A and B of coproporphyrinogen-III to yield the vinyl groups in protoporphyrinogen-IX. This chain is Oxygen-dependent coproporphyrinogen-III oxidase, found in Photorhabdus laumondii subsp. laumondii (strain DSM 15139 / CIP 105565 / TT01) (Photorhabdus luminescens subsp. laumondii).